A 356-amino-acid polypeptide reads, in one-letter code: (+)-(1(10)E,4E,6S,7R)-germacradien-6-ol synthase (356 aa).

Mg(2+) contacts are provided by D86 and D91. A DDXXXD motif motif is present at residues 86–91 (DDEYCD). R181 is a binding site for substrate. Positions 227 and 231 each coordinate Mg(2+). K234 contacts substrate. Residue E235 coordinates Mg(2+). 314-315 (RY) is a substrate binding site.

It belongs to the terpene synthase family. Mg(2+) serves as cofactor.

The enzyme catalyses (2E,6E)-farnesyl diphosphate + H2O = (+)-(1(10)E,4E,6S,7R)-germacradien-6-ol + diphosphate. It functions in the pathway secondary metabolite biosynthesis; terpenoid biosynthesis. Functionally, catalyzes the conversion of (2E,6E)-farnesyl diphosphate (FPP) to yield the sesquiterpene (+)-(1(10)E,4E,6S,7R)-germacradien-6-ol via a putative 1,10-cyclization, which could require the abstraction of the pyrophosphate from FPP to yield the (E,E)-germacradienyl cation. The only accepted substrate is farnesyl diphosphate (FPP). This is (+)-(1(10)E,4E,6S,7R)-germacradien-6-ol synthase from Streptomyces pratensis (strain ATCC 33331 / IAF-45CD).